The primary structure comprises 261 residues: MANLLDKTRKITSILQRSVDSLEGDLPYNNMAAQLADIIDCNAAIVNGGGALLGFAMKYKTNNDRVEKFFKAKQLPEEYIRGISRVYDTQENIGIDSDLTIFPVELKDDFPDGLTTIAPIYGGGMRLGSFIIWRNDHDFVDDDLILVEIASTVVGLQLLHLQTENLEETIRKQTAINMAINTLSYSEIKAVSAILNELDGLEGRLTASVIADRIGITRSVIVNALRKLESAGIIESRSLGMKGTYLKVLNEGIYDKLKEYE.

The tract at residues 1–159 (MANLLDKTRK…ASTVVGLQLL (159 aa)) is GAF domain. The segment at residues 207–226 (ASVIADRIGITRSVIVNALR) is a DNA-binding region (H-T-H motif).

The protein belongs to the CodY family.

It localises to the cytoplasm. In terms of biological role, DNA-binding global transcriptional regulator which is involved in the adaptive response to starvation and acts by directly or indirectly controlling the expression of numerous genes in response to nutrient availability. During rapid exponential growth, CodY is highly active and represses genes whose products allow adaptation to nutrient depletion. In Streptococcus thermophilus (strain CNRZ 1066), this protein is Global transcriptional regulator CodY.